Here is a 469-residue protein sequence, read N- to C-terminus: UDP-N-acetylmuramate--L-alanine ligase (469 aa).

Position 113 to 119 (113 to 119 (GAHGKTT)) interacts with ATP.

It belongs to the MurCDEF family.

The protein resides in the cytoplasm. The enzyme catalyses UDP-N-acetyl-alpha-D-muramate + L-alanine + ATP = UDP-N-acetyl-alpha-D-muramoyl-L-alanine + ADP + phosphate + H(+). Its pathway is cell wall biogenesis; peptidoglycan biosynthesis. Cell wall formation. The polypeptide is UDP-N-acetylmuramate--L-alanine ligase (Syntrophobacter fumaroxidans (strain DSM 10017 / MPOB)).